Here is a 605-residue protein sequence, read N- to C-terminus: F-box/WD repeat-containing protein pof1 (605 aa).

The F-box domain maps to 107-153 (LDFLSLLPVEISFRILSFLDARSLCQAAQVSKHWKELADDDVIWHRM). The segment covering 195–212 (GVDQAHESSPVKKAKLDD) has biased composition (basic and acidic residues). The segment at 195 to 231 (GVDQAHESSPVKKAKLDDYPTSSNEETISSVKPPSPN) is disordered. Positions 214–231 (PTSSNEETISSVKPPSPN) are enriched in polar residues. Phosphoserine is present on residues Ser-229 and Ser-232. WD repeat units follow at residues 271 to 299 (GHSD…RLWN), 311 to 339 (GHSS…RIWN), 350 to 379 (HGHT…KLWH), 390 to 420 (GHTG…KIWS), 432 to 460 (AHIG…KQWD), 472 to 500 (GHIE…KVWE), and 510 to 538 (NHSE…YLWL).

As to quaternary structure, a part of the E3 ubiquitin ligase Skp1-Cullin-1-F-box (SCF) complex. Interacts with cul1, skp1 and phosphorylated zip1.

The protein resides in the nucleus. In terms of biological role, probably recognizes and binds to some phosphorylated proteins and promotes their ubiquitination and degradation. Required for the inactivation of zip1 via ubiquitination. The chain is F-box/WD repeat-containing protein pof1 (pof1) from Schizosaccharomyces pombe (strain 972 / ATCC 24843) (Fission yeast).